The chain runs to 79 residues: Putative defensin-like protein 80 (79 aa).

The first 26 residues, 1-26 (MDVQRSSYIFIALSIIAMFLITGVKP), serve as a signal peptide directing secretion. 4 disulfide bridges follow: cysteine 32–cysteine 65, cysteine 36–cysteine 58, cysteine 44–cysteine 63, and cysteine 48–cysteine 64.

The protein belongs to the DEFL family.

It localises to the secreted. This is Putative defensin-like protein 80 (LCR81) from Arabidopsis thaliana (Mouse-ear cress).